A 104-amino-acid chain; its full sequence is Ribonuclease P protein component 4 (104 aa).

4 residues coordinate Zn(2+): cysteine 57, cysteine 60, cysteine 83, and cysteine 86.

It belongs to the eukaryotic/archaeal RNase P protein component 4 family. As to quaternary structure, consists of a catalytic RNA component and at least 4-5 protein subunits. Zn(2+) is required as a cofactor.

It localises to the cytoplasm. It carries out the reaction Endonucleolytic cleavage of RNA, removing 5'-extranucleotides from tRNA precursor.. Functionally, part of ribonuclease P, a protein complex that generates mature tRNA molecules by cleaving their 5'-ends. The sequence is that of Ribonuclease P protein component 4 from Saccharolobus islandicus (strain M.16.27) (Sulfolobus islandicus).